The sequence spans 444 residues: Cerebral cavernous malformations 2 protein (444 aa).

The interval methionine 1–threonine 37 is disordered. Phosphoserine is present on serine 15. Residues leucine 22 to threonine 37 are compositionally biased toward basic and acidic residues. Positions leucine 59–serine 248 constitute a PID domain. Residue serine 164 is modified to Phosphoserine. The segment at serine 283–aspartate 376 is harmonin homology domain. Phosphoserine occurs at positions 384 and 393. Positions alanine 391–arginine 423 are disordered. Residues leucine 392–serine 408 are compositionally biased toward low complexity. Position 394 is a phosphothreonine (threonine 394). Residue serine 396 is modified to Phosphoserine. Threonine 399 is subject to Phosphothreonine.

It belongs to the CCM2 family. In terms of assembly, part of a complex with MAP2K3, MAP3K3 and RAC1. Binds RAC1 directly and independently of its nucleotide-bound state. Interacts with HEG1 and KRIT1; KRIT1 greatly facilitates the interaction with HEG1. Interacts with PDCD10.

The protein resides in the cytoplasm. Functionally, component of the CCM signaling pathway which is a crucial regulator of heart and vessel formation and integrity. May act through the stabilization of endothelial cell junctions. May function as a scaffold protein for MAP2K3-MAP3K3 signaling. Seems to play a major role in the modulation of MAP3K3-dependent p38 activation induced by hyperosmotic shock. The chain is Cerebral cavernous malformations 2 protein (CCM2) from Homo sapiens (Human).